The following is a 321-amino-acid chain: MAVYTDIAEDDLKWFLSEYDAGSLLSYKGIAEGVENSNFLLHTSKEPLILTLYEKRVEKTDLPFFLGLMQHLAARGLSCPLPLPRRDGALLGSLSGRPAALISFLEGMWLRKPEAKHCREVGRALAQMHVAGDGFELKRPNALSIDGWRTLWEKSEARADEVEPGLQHEIRGELDFLSAAWPKGLPAGVIHADLFPDNVFFLGDQLSGLIDFYFACNDLLAYDVSICLNAWCFEKDGAYNITKGTAMLEGYQSVRPLSGEEIAALPVLSRGSALRFFLTRLYDWLTTPEGAMVTKKDPLEYLRKLRFHRQIGSAAEYGLSL.

Belongs to the pseudomonas-type ThrB family.

The catalysed reaction is L-homoserine + ATP = O-phospho-L-homoserine + ADP + H(+). The protein operates within amino-acid biosynthesis; L-threonine biosynthesis; L-threonine from L-aspartate: step 4/5. This chain is Homoserine kinase, found in Rhizobium etli (strain CIAT 652).